A 316-amino-acid polypeptide reads, in one-letter code: Ribosomal protein L11 methyltransferase (316 aa).

Residues threonine 157, glycine 178, aspartate 200, and asparagine 243 each contribute to the S-adenosyl-L-methionine site.

Belongs to the methyltransferase superfamily. PrmA family.

Its subcellular location is the cytoplasm. It carries out the reaction L-lysyl-[protein] + 3 S-adenosyl-L-methionine = N(6),N(6),N(6)-trimethyl-L-lysyl-[protein] + 3 S-adenosyl-L-homocysteine + 3 H(+). Functionally, methylates ribosomal protein L11. In Streptococcus pneumoniae (strain JJA), this protein is Ribosomal protein L11 methyltransferase.